A 351-amino-acid polypeptide reads, in one-letter code: Inner kinetochore subunit fta2 (351 aa).

The interval 1–71 is disordered; sequence MSGRRYSQIS…SSNGRVDTDR (71 aa). A compositionally biased stretch (low complexity) spans 7–18; the sequence is SQISQQEGSSSS. Polar residues predominate over residues 54–66; it reads NENSGQSKSSNGR.

It belongs to the CENP-P/CTF19 family. In terms of assembly, component of the heterotetrameric kinetochore subcomplex COMA, which consists of fta2, fta7, mal2 and mis17. The COMA subcomplex is part of a larger constitutive centromere-associated network (CCAN) (also known as central kinetochore Sim4 complex in fission yeast), which is composed of at least cnl2, cnp3, cnp20, fta1, fta2, fta3, fta4, fta6, fta7, mal2, mhf1, mhf2, mis6, mis15, mis17, sim4 and wip1.

It localises to the nucleus. Its subcellular location is the chromosome. It is found in the centromere. The protein localises to the kinetochore. Component of the kinetochore, a multiprotein complex that assembles on centromeric DNA and attaches chromosomes to spindle microtubules, mediating chromosome segregation and sister chromatid segregation during meiosis and mitosis. Component of the inner kinetochore COMA complex, which connects centromere-associated proteins and the outer kinetochore. COMA interacts with other inner kinetochore proteins to form the inner kinetochore constitutive centromere-associated network (CCAN), which serves as a structural platform for outer kinetochore assembly. Fta2, fta3 and fta4 associate with the central core (cnt) and inner repeat (inr) region of the centromere. This Schizosaccharomyces pombe (strain 972 / ATCC 24843) (Fission yeast) protein is Inner kinetochore subunit fta2 (fta2).